The primary structure comprises 192 residues: N-terminal acetyltransferase A complex catalytic subunit NAA10 (192 aa).

An N-acetyltransferase domain is found at 2-152; sequence VCIRRATVDD…DAYDMRKNLK (151 aa).

Belongs to the acetyltransferase family. ARD1 subfamily. Part of the NatA complex. Interacts with NAA15. As to expression, expressed in leaves, roots, shoots and flowers.

The enzyme catalyses N-terminal glycyl-[protein] + acetyl-CoA = N-terminal N(alpha)-acetylglycyl-[protein] + CoA + H(+). It catalyses the reaction N-terminal L-alanyl-[protein] + acetyl-CoA = N-terminal N(alpha)-acetyl-L-alanyl-[protein] + CoA + H(+). It carries out the reaction N-terminal L-seryl-[protein] + acetyl-CoA = N-terminal N(alpha)-acetyl-L-seryl-[protein] + CoA + H(+). The catalysed reaction is N-terminal L-valyl-[protein] + acetyl-CoA = N-terminal N(alpha)-acetyl-L-valyl-[protein] + CoA + H(+). The enzyme catalyses N-terminal L-cysteinyl-[protein] + acetyl-CoA = N-terminal N(alpha)-acetyl-L-cysteinyl-[protein] + CoA + H(+). It catalyses the reaction N-terminal L-threonyl-[protein] + acetyl-CoA = N-terminal N(alpha)-acetyl-L-threonyl-[protein] + CoA + H(+). Catalytic subunit of the NatA N-alpha-acetyltransferase complex. Required for male gametocyte development, embryogenesis, suspensor development and the formation of the quiescent center (QC) in the root meristem. Involved in plant immunity through the regulation of SNC1 and RPM1 stability. The protein is N-terminal acetyltransferase A complex catalytic subunit NAA10 of Arabidopsis thaliana (Mouse-ear cress).